A 1275-amino-acid polypeptide reads, in one-letter code: Probable Rho-type GTPase-activating protein 2 (1275 aa).

Disordered regions lie at residues 118 to 146 (KYESTDSFPSSQPSRANSPQSDSYSSPYE), 213 to 238 (NTKRSHRSSEEPGASSPVTSPILKDS), 280 to 306 (SSFRRPITKPTPFNSDSNISIDPKDNN), and 335 to 365 (SSPRRKSISIVKPHGISSPKHSTNNLSSKSG). A compositionally biased stretch (polar residues) spans 122-143 (TDSFPSSQPSRANSPQSDSYSS). Polar residues-rich tracts occupy residues 290–299 (TPFNSDSNIS) and 353–364 (PKHSTNNLSSKS). Serine 388 carries the post-translational modification Phosphoserine. Disordered stretches follow at residues 390-466 (IIEN…RSSF) and 539-561 (FSKSKSHNHHPSSQVEKSTSNSK). 2 stretches are compositionally biased toward polar residues: residues 450-466 (SLSLQKTGSSDTRRSSF) and 552-561 (QVEKSTSNSK). The PH domain occupies 719-836 (HAQKEGVLLK…WLRAILRQVP (118 aa)). Residues 957 to 971 (ADTRRNQDAPEKHVP) show a composition bias toward basic and acidic residues. Disordered stretches follow at residues 957-988 (ADTRRNQDAPEKHVPVIEIQSSRPSLEKTDQS) and 1254-1275 (NGAQNESDSDVSDDNGEDNEFF). Positions 1065-1275 (LPLNEAVNIS…DDNGEDNEFF (211 aa)) constitute a Rho-GAP domain. Residues 1260-1275 (SDSDVSDDNGEDNEFF) are compositionally biased toward acidic residues.

The protein resides in the nucleus. Functionally, GTPase-activating protein for Rho-type proteins. The chain is Probable Rho-type GTPase-activating protein 2 (rga2) from Schizosaccharomyces pombe (strain 972 / ATCC 24843) (Fission yeast).